Consider the following 768-residue polypeptide: MSNLGKSTGSRKDTKMRIRAFPMTMDEKYVNSIWDLLKNAIQEIQRKNNSGLSFEELYRNAYTMVLHKHGEKLYTGLREVVTEHLINKVREDVLNSLNNNFLQTLNQAWNDHQTAMVMIRDILMYMDRVYVQQNNVENVYNLGLIIFRDQVVRYGCIRDHLRQTLLDMIARERKGEVVDRGAIRNACQMLMILGLEGRSVYEEDFEAPFLEMSAEFFQMESQKFLAENSASVYIKKVEARINEEIERVMHCLDKSTEEPIVKVVERELISKHMKTIVEMENSGLVHMLKNGKTEDLACMYKLFSRVPNGLKTMCECMSLYLREQGKALVSEEGEGKNPVDYIQGLLDLKSRFDRFLQESFSNDRLFKQTIAGDFEYFLNLNSRSPEYLSLFIDDKLKKGVKGLTEQEVESILDKAMVLFRFMQEKDVFERYYKQHLARRLLTNKSVSDDSEKNMISKLKTECGCQFTSKLEGMFRDMSISNTTMDEFRQHLQTTGVSLGGVDLTVRVLTTGYWPTQSATPKCNIPPSPRHAFEIFRRFYLAKHSGRQLTLQHHMGSADLNATFYGAVKKEDGSEVGVGGAQVTGSNTRKHILQVSTFQMTILMLFNNREKYTFEEIQQETDIPERELVRALQSLACGKPTQRVLTKEPKSKEIESGHMFTVNDQFTSKLHRVKIQTVAAKQGESDPERKETRQKVDDDRKHEIEAAIVRIMKSRKKMQHNVLVAEVTQQLKARFLPSPVVIKKRIEGLIEREYLARTPEDRKVYTYVA.

The segment at 677–698 is disordered; sequence VAAKQGESDPERKETRQKVDDD. Residues 682-698 show a composition bias toward basic and acidic residues; sequence GESDPERKETRQKVDDD. Positions 698-760 constitute a Cullin neddylation domain; sequence DRKHEIEAAI…REYLARTPED (63 aa). A Glycyl lysine isopeptide (Lys-Gly) (interchain with G-Cter in NEDD8) cross-link involves residue Lys712.

It belongs to the cullin family. In terms of assembly, component of multiple BCR (BTB-CUL3-RBX1) E3 ubiquitin-protein ligase complexes formed of cul3, rbx1 and a variable BTB domain-containing protein acting as both, adapter to cullin and substrate recognition subunit. Interacts with btbd6. In terms of processing, neddylated. Attachment of NEDD8 is required for the E3 ubiquitin-protein ligase activity of the SCF-like complex.

The protein localises to the nucleus. The protein operates within protein modification; protein ubiquitination. Functionally, probable core component of cullin-based SCF-like E3 ubiquitin-protein ligase complexes which mediate the ubiquitination and subsequent proteasomal degradation of target proteins. The E3 ubiquitin-protein ligase activity of the complex is dependent on the neddylation of the cullin subunit. Involved in ER-Golgi transport by regulating the size of COPII coats, thereby playing a key role in collagen export, which is required for embryonic stem (ES) cells division. May play a role in the regulation of mittotic entry via ubiquitination of aurka. The protein is Cullin-3-B (cul3b) of Xenopus laevis (African clawed frog).